The chain runs to 149 residues: Gamma-glutamylaminecyclotransferase (149 aa).

Tyr7–Leu10 lines the substrate pocket. The active-site Proton acceptor is the Glu82.

The protein belongs to the gamma-glutamylcyclotransferase family. In terms of assembly, monomer.

The catalysed reaction is epsilon-(gamma-L-glutamyl)-L-lysine = 5-oxo-L-proline + L-lysine. Contributes to degradation of proteins cross-linked by transglutaminases by degrading the cross-link between a lysine and a glutamic acid residue. Catalyzes the formation of 5-oxo-L-proline from L-gamma-glutamyl-L-epsilon-lysine. Inactive with L-gamma-glutamyl-alpha-amino acid substrates such as L-gamma-glutamyl-L-alpha-cysteine and L-gamma-glutamyl-L-alpha-alanine. This chain is Gamma-glutamylaminecyclotransferase (Ggact), found in Mus musculus (Mouse).